Here is a 157-residue protein sequence, read N- to C-terminus: Ubiquitin-like protein 4A (157 aa).

One can recognise a Ubiquitin-like domain in the interval 1 to 76 (MQLTVKALQG…LNLVVKPLEK (76 aa)). Lysine 48 is covalently cross-linked (Glycyl lysine isopeptide (Lys-Gly) (interchain with G-Cter in ubiquitin)). Serine 90 carries the phosphoserine modification. Residues 96–138 (WQLISKVLARHFSAADASRVLEQLQRDYQRSLSRLTLDDIERL) form a required and sufficient for interaction with BAG6 region.

As to quaternary structure, component of the BAG6/BAT3 complex, at least composed of BAG6, UBL4A and GET4/TRC35. Interacts with BAG6; the interaction is direct and required for UBL4A protein stability. Interacts with USP13; may be indirect via BAG6. Post-translationally, polyubiquitinated. Ubiquitination by AMFR and deubiquitination by USP13 may regulate the interaction between the BAG6/BAT complex and SGTA and therefore may regulate client proteins fate.

It localises to the cytoplasm. Its subcellular location is the cytosol. It is found in the nucleus. As part of a cytosolic protein quality control complex, the BAG6/BAT3 complex, maintains misfolded and hydrophobic patches-containing proteins in a soluble state and participates in their proper delivery to the endoplasmic reticulum or alternatively can promote their sorting to the proteasome where they undergo degradation. The BAG6/BAT3 complex is involved in the post-translational delivery of tail-anchored/type II transmembrane proteins to the endoplasmic reticulum membrane. Recruited to ribosomes, it interacts with the transmembrane region of newly synthesized tail-anchored proteins and together with SGTA and ASNA1 mediates their delivery to the endoplasmic reticulum. Client proteins that cannot be properly delivered to the endoplasmic reticulum are ubiquitinated and sorted to the proteasome. Similarly, the BAG6/BAT3 complex also functions as a sorting platform for proteins of the secretory pathway that are mislocalized to the cytosol either delivering them to the proteasome for degradation or to the endoplasmic reticulum. The BAG6/BAT3 complex also plays a role in the endoplasmic reticulum-associated degradation (ERAD), a quality control mechanism that eliminates unwanted proteins of the endoplasmic reticulum through their retrotranslocation to the cytosol and their targeting to the proteasome. It maintains these retrotranslocated proteins in an unfolded yet soluble state condition in the cytosol to ensure their proper delivery to the proteasome. This is Ubiquitin-like protein 4A (UBL4A) from Plecturocebus moloch (Dusky titi monkey).